Reading from the N-terminus, the 231-residue chain is NADH-ubiquinone oxidoreductase chain 4 (231 aa).

Transmembrane regions (helical) follow at residues 1–21 (PIAGSMVLAAILLKLGGYGII), 34–54 (MFLPFIVLALWGAILANLTCL), 63–85 (IAYSSISHMGLVVAAIIIQTPWG), 89–111 (AMALMIAHGFTSSALFCLANTTY), 128–148 (ILPMTTTWWLFVNLMNIAIPP), and 169–189 (TIIMLGLSMLITASYSLHMFL).

This sequence belongs to the complex I subunit 4 family.

The protein localises to the mitochondrion membrane. The enzyme catalyses a ubiquinone + NADH + 5 H(+)(in) = a ubiquinol + NAD(+) + 4 H(+)(out). In terms of biological role, core subunit of the mitochondrial membrane respiratory chain NADH dehydrogenase (Complex I) that is believed to belong to the minimal assembly required for catalysis. Complex I functions in the transfer of electrons from NADH to the respiratory chain. The immediate electron acceptor for the enzyme is believed to be ubiquinone. The protein is NADH-ubiquinone oxidoreductase chain 4 (MT-ND4) of Deinagkistrodon acutus (Hundred-pace snake).